The following is a 503-amino-acid chain: ATP synthase subunit alpha (503 aa).

Residue 170–177 (GDKQTGKT) participates in ATP binding.

Belongs to the ATPase alpha/beta chains family. As to quaternary structure, F-type ATPases have 2 components, CF(1) - the catalytic core - and CF(0) - the membrane proton channel. CF(1) has five subunits: alpha(3), beta(3), gamma(1), delta(1), epsilon(1). CF(0) has three main subunits: a(1), b(2) and c(9-12). The alpha and beta chains form an alternating ring which encloses part of the gamma chain. CF(1) is attached to CF(0) by a central stalk formed by the gamma and epsilon chains, while a peripheral stalk is formed by the delta and b chains.

It is found in the cell inner membrane. The catalysed reaction is ATP + H2O + 4 H(+)(in) = ADP + phosphate + 5 H(+)(out). Functionally, produces ATP from ADP in the presence of a proton gradient across the membrane. The alpha chain is a regulatory subunit. The chain is ATP synthase subunit alpha from Helicobacter pylori (strain Shi470).